We begin with the raw amino-acid sequence, 295 residues long: Probable lipid kinase YegS-like (295 aa).

One can recognise a DAGKc domain in the interval 1–129 (MQGRKAMLVL…IDLGQAGDQL (129 aa)). ATP-binding positions include T39, 65–71 (GDGTLRD), and T92. Residues M210, D213, and L215 each coordinate Mg(2+). Residue E264 is the Proton acceptor of the active site.

The protein belongs to the diacylglycerol/lipid kinase family. YegS lipid kinase subfamily. The cofactor is Mg(2+). Ca(2+) is required as a cofactor.

Its subcellular location is the cytoplasm. In terms of biological role, probably phosphorylates lipids; the in vivo substrate is unknown. The sequence is that of Probable lipid kinase YegS-like from Pseudomonas putida (strain ATCC 47054 / DSM 6125 / CFBP 8728 / NCIMB 11950 / KT2440).